Here is a 273-residue protein sequence, read N- to C-terminus: tRNA (guanine-N(7)-)-methyltransferase A (273 aa).

S-adenosyl-L-methionine is bound by residues G86, E109, R111, N142, A143, and L162. The active site involves D165. Residues 166–174 (PHFKKTKHK) are alphaC helix. Residues T240 and E242 each coordinate S-adenosyl-L-methionine. An alpha6 helix region spans residues 240-248 (TEEGKKVQR).

The protein belongs to the class I-like SAM-binding methyltransferase superfamily. TrmB family. As to quaternary structure, catalytic component of the METTL1-WDR4 complex, composed of mettl1 and wdr4.

The protein localises to the nucleus. It carries out the reaction guanosine(46) in tRNA + S-adenosyl-L-methionine = N(7)-methylguanosine(46) in tRNA + S-adenosyl-L-homocysteine. It catalyses the reaction a guanosine in mRNA + S-adenosyl-L-methionine = an N(7)-methylguanosine in mRNA + S-adenosyl-L-homocysteine. The catalysed reaction is a guanosine in miRNA + S-adenosyl-L-methionine = an N(7)-methylguanosine in miRNA + S-adenosyl-L-homocysteine. It participates in tRNA modification; N(7)-methylguanine-tRNA biosynthesis. Its function is as follows. Catalytic component of METTL1-WDR4 methyltransferase complex that mediates the formation of N(7)-methylguanine in a subset of RNA species, such as tRNAs, mRNAs and microRNAs (miRNAs). Catalyzes the formation of N(7)-methylguanine at position 46 (m7G46) in a large subset of tRNAs that contain the 5'-RAGGU-3' motif within the variable loop. M7G46 interacts with C13-G22 in the D-loop to stabilize tRNA tertiary structure and protect tRNAs from decay. Also acts as a methyltransferase for a subset of internal N(7)-methylguanine in mRNAs. Internal N(7)-methylguanine methylation of mRNAs in response to stress promotes their relocalization to stress granules, thereby suppressing their translation. Also methylates a specific subset of miRNAs. In Xenopus tropicalis (Western clawed frog), this protein is tRNA (guanine-N(7)-)-methyltransferase A (mettl1-A).